Here is a 324-residue protein sequence, read N- to C-terminus: UDP-N-acetylenolpyruvoylglucosamine reductase (324 aa).

Residues 36–217 (FRAGGLAELM…IRAEMDAVRA (182 aa)) form the FAD-binding PCMH-type domain. Residue Arg183 is part of the active site. Residue Ser232 is the Proton donor of the active site. Glu302 is a catalytic residue.

It belongs to the MurB family. The cofactor is FAD.

The protein localises to the cytoplasm. It carries out the reaction UDP-N-acetyl-alpha-D-muramate + NADP(+) = UDP-N-acetyl-3-O-(1-carboxyvinyl)-alpha-D-glucosamine + NADPH + H(+). It participates in cell wall biogenesis; peptidoglycan biosynthesis. Its function is as follows. Cell wall formation. This chain is UDP-N-acetylenolpyruvoylglucosamine reductase, found in Rhizobium rhizogenes (strain K84 / ATCC BAA-868) (Agrobacterium radiobacter).